Consider the following 482-residue polypeptide: Anaerobic nitric oxide reductase flavorubredoxin (482 aa).

The interval 30 to 210 is zinc metallo-hydrolase; sequence LRGSSYNSYL…PFSRLVTPKI (181 aa). Fe cation is bound by residues His-79, Glu-81, Asp-83, His-147, Asp-166, and His-227. The Flavodoxin-like domain occupies 254–393; the sequence is ITIFYDTMSN…LCRQHGRDIA (140 aa). FMN contacts are provided by residues 260–264 and 342–369; these read TMSNN and AFGS…EMSL. Positions 426-477 constitute a Rubredoxin-like domain; sequence GPSMQCSVCQWIYDPAKGEPLQDVAPGTPWSDVPDNFLCPECSLGKDVFDVL. Fe cation is bound by residues Cys-431, Cys-434, Cys-464, and Cys-467.

It in the N-terminal section; belongs to the zinc metallo-hydrolase group 3 family. In terms of assembly, homotetramer. Requires Fe cation as cofactor. FMN is required as a cofactor.

It is found in the cytoplasm. It functions in the pathway nitrogen metabolism; nitric oxide reduction. In terms of biological role, anaerobic nitric oxide reductase; uses NADH to detoxify nitric oxide (NO), protecting several 4Fe-4S NO-sensitive enzymes. Has at least 2 reductase partners, only one of which (NorW, flavorubredoxin reductase) has been identified. NO probably binds to the di-iron center; electrons enter from the NorW at rubredoxin and are transferred sequentially to the FMN center and the di-iron center. Also able to function as an aerobic oxygen reductase. The polypeptide is Anaerobic nitric oxide reductase flavorubredoxin (Citrobacter koseri (strain ATCC BAA-895 / CDC 4225-83 / SGSC4696)).